Consider the following 370-residue polypeptide: 4-hydroxy-3-methylbut-2-en-1-yl diphosphate synthase (flavodoxin) (370 aa).

Residues Cys270, Cys273, Cys305, and Glu312 each coordinate [4Fe-4S] cluster.

It belongs to the IspG family. [4Fe-4S] cluster serves as cofactor.

It carries out the reaction (2E)-4-hydroxy-3-methylbut-2-enyl diphosphate + oxidized [flavodoxin] + H2O + 2 H(+) = 2-C-methyl-D-erythritol 2,4-cyclic diphosphate + reduced [flavodoxin]. The protein operates within isoprenoid biosynthesis; isopentenyl diphosphate biosynthesis via DXP pathway; isopentenyl diphosphate from 1-deoxy-D-xylulose 5-phosphate: step 5/6. In terms of biological role, converts 2C-methyl-D-erythritol 2,4-cyclodiphosphate (ME-2,4cPP) into 1-hydroxy-2-methyl-2-(E)-butenyl 4-diphosphate. The chain is 4-hydroxy-3-methylbut-2-en-1-yl diphosphate synthase (flavodoxin) from Hamiltonella defensa subsp. Acyrthosiphon pisum (strain 5AT).